We begin with the raw amino-acid sequence, 570 residues long: Carotenoid cleavage dioxygenase 8, chloroplastic (570 aa).

The transit peptide at 1 to 56 (MASLITTKAMMSHHHVLSSTRITTLYSDNSIGDQQIKTKPQVPHRLFARRIFGVTR) directs the protein to the chloroplast. Residues His254, His305, His372, and His563 each coordinate Fe cation.

This sequence belongs to the carotenoid oxygenase family. It depends on Fe(2+) as a cofactor. As to expression, expressed in flowers, siliques, inflorescence stems, petiole and leaves, and at a much higher level in roots.

It localises to the plastid. The protein localises to the chloroplast. It carries out the reaction 9-cis-10'-apo-beta-carotenal + 2 O2 = (2E,4E,6E)-7-hydroxy-4-methylhepta-2,4,6-trienal + (11R)-carlactone. The enzyme catalyses all-trans-10'-apo-beta-carotenal + O2 = (2E,4E,6E)-4-methylocta-2,4,6-trienedial + 13-apo-beta-carotenone. Its function is as follows. Involved in strigolactones biosynthesis by cleaving the C(27) 9-cis-10'-apo-beta-carotenal produced by CCD7. Produces the C(19) carlactone and a C(8) hydroxyaldehyde. Also shows lower activity with all-trans-10'-apo-beta-carotenal producing a C(9) dialdehyde and the C(18) 13-apo-beta-carotenone. Strigolactones are hormones that inhibit tillering and shoot branching through the MAX-dependent pathway, contribute to the regulation of shoot architectural response to phosphate-limiting conditions and function as rhizosphere signal that stimulates hyphal branching of arbuscular mycorrhizal fungi and trigger seed germination of root parasitic weeds. Also active on other carotenoid substrates like licopene or zeaxanthin. The protein is Carotenoid cleavage dioxygenase 8, chloroplastic of Arabidopsis thaliana (Mouse-ear cress).